Consider the following 364-residue polypeptide: Aminomethyltransferase (364 aa).

Belongs to the GcvT family. As to quaternary structure, the glycine cleavage system is composed of four proteins: P, T, L and H.

It catalyses the reaction N(6)-[(R)-S(8)-aminomethyldihydrolipoyl]-L-lysyl-[protein] + (6S)-5,6,7,8-tetrahydrofolate = N(6)-[(R)-dihydrolipoyl]-L-lysyl-[protein] + (6R)-5,10-methylene-5,6,7,8-tetrahydrofolate + NH4(+). Functionally, the glycine cleavage system catalyzes the degradation of glycine. In Shewanella sp. (strain ANA-3), this protein is Aminomethyltransferase.